The following is a 306-amino-acid chain: tRNA dimethylallyltransferase 2 (306 aa).

Residue 11-18 coordinates ATP; it reads GPTASGKT. 13–18 is a binding site for substrate; it reads TASGKT. An interaction with substrate tRNA region spans residues 36-39; it reads DSRQ.

This sequence belongs to the IPP transferase family. In terms of assembly, monomer. Requires Mg(2+) as cofactor.

It catalyses the reaction adenosine(37) in tRNA + dimethylallyl diphosphate = N(6)-dimethylallyladenosine(37) in tRNA + diphosphate. Functionally, catalyzes the transfer of a dimethylallyl group onto the adenine at position 37 in tRNAs that read codons beginning with uridine, leading to the formation of N6-(dimethylallyl)adenosine (i(6)A). The protein is tRNA dimethylallyltransferase 2 of Bacteroides thetaiotaomicron (strain ATCC 29148 / DSM 2079 / JCM 5827 / CCUG 10774 / NCTC 10582 / VPI-5482 / E50).